We begin with the raw amino-acid sequence, 818 residues long: MAGNGKDKEVDKSPSVSTLKLLGKRLFNSSSHTDNSSLLLSAEQLGNGRSLRKRPTSPSISGSGSGGNSPSSSAGARQRSASLHRRKNNASVGFSNGSVSSHKSSVALQDLIKHNNNPYLNSPSDILGTGTGIASTRDRDRAVLDREKEKERARNKERNTHHAGLPQRSNSMASHHFPNENIVYNPYGISPNHARPDTAFADTLNTNKENDLSFYMHDGNSKIRMLPLPIANPNDFLPEDMKQYSVHLTDNFVFDTDNKPIGSGGSSEVRKVKSSYRQKDVYALKKLNMIYHESPEKFYKRCSKEFIIAKHLSHNVHITNTFYLLKVPTTTYTTRGWGFIMELGVKDLFQLMERTGWKNVPFNEKYCLFKQVAQGIKFCHDNGIAHRDLKPENVLISKEGICKLTDFGISDWYHVIPHDYTSPVKTCQGMIGSPPYTPPEVMYFDAKKHYPEKFQKPYNPLAMDSYALGIMLITMINNIIPFIDSCNTDARFREFEVSYDNFINHQNPHFRDKGCHKPGPGSEYSLARNFKNTDATRIAWRLADPNPATRYTMDDLFNDPFFQQIETCVEPNDDDLVRVPELRKSTSTNDFSENSLDAPHDQEVIHTSNPFLKKETLTSKPRSMLEIAESPSLKQKSKVKDSAKTKTHDVGDEGGNESTKPKQQDKKENLKKDEVKNGDKDKVIEEATTTNVDSILEKPTPTSTKVEDNLSEDDSTMKELKSMLNSTPTTPTHNGPTPLPAKAGTQLDKRMSDLSLKSETPASTKNFSAPNVSSSSNSLRSLGSPSVSSSKKKKVIHHHLDITNSVTNMSSVSAFISR.

Residues asparagine 28–leucine 39 are compositionally biased toward polar residues. Disordered stretches follow at residues asparagine 28–serine 100 and asparagine 117–phenylalanine 177. Threonine 56 bears the Phosphothreonine mark. Low complexity predominate over residues serine 57–alanine 81. Residues serine 59 and serine 80 each carry the phosphoserine modification. Residues threonine 136–threonine 160 are compositionally biased toward basic and acidic residues. Residues aspartate 255–phenylalanine 562 form the Protein kinase domain. Residues isoleucine 261–valine 269 and lysine 285 contribute to the ATP site. Aspartate 388 (proton acceptor) is an active-site residue. Positions serine 585–serine 595 are enriched in polar residues. Positions serine 585–valine 795 are disordered. A phosphoserine mark is found at serine 623 and serine 632. 2 stretches are compositionally biased toward basic and acidic residues: residues lysine 638–glycine 651 and threonine 659–glutamate 685. Serine 694 carries the phosphoserine modification. Position 700 is a phosphothreonine (threonine 700). At serine 711 the chain carries Phosphoserine. Over residues threonine 727 to proline 736 the composition is skewed to low complexity. Threonine 737 carries the post-translational modification Phosphothreonine. Serine 752, serine 755, serine 778, and serine 781 each carry phosphoserine. The segment covering serine 755–phenylalanine 767 has biased composition (polar residues). Low complexity predominate over residues serine 768–serine 789.

This sequence belongs to the protein kinase superfamily. Ser/Thr protein kinase family.

The protein resides in the nucleus. The protein localises to the cytoplasm. The catalysed reaction is L-seryl-[protein] + ATP = O-phospho-L-seryl-[protein] + ADP + H(+). It catalyses the reaction L-threonyl-[protein] + ATP = O-phospho-L-threonyl-[protein] + ADP + H(+). Its function is as follows. Essential determinant for high-affinity spermidine transport. Required for the activation of the plasma membrane proton pump PMA1 via phosphorylation of 'Ser-899'. This Saccharomyces cerevisiae (strain ATCC 204508 / S288c) (Baker's yeast) protein is Serine/threonine-protein kinase PTK2/STK2 (PTK2).